Reading from the N-terminus, the 404-residue chain is Caspase-1 (404 aa).

The CARD domain occupies 1–91; it reads MADKVLKEKR…YLAGTLGLSA (91 aa). The propeptide occupies 1–119; sequence MADKVLKEKR…SFPAPQAVQD (119 aa). Lys134 participates in a covalent cross-link: Glycyl lysine isopeptide (Lys-Gly) (interchain with G-Cter in ubiquitin). Catalysis depends on residues His237 and Cys285. Positions 298-316 are cleaved as a propeptide — interdomain linker; sequence SVGVSGNLSLPTTEEFEDD. Ser302 is subject to Phosphoserine.

It belongs to the peptidase C14A family. In terms of assembly, heterotetramer that consists of two anti-parallel arranged heterodimers, each one formed by a 20 kDa (Caspase-1 subunit p20) and a 10 kDa (Caspase-1 subunit p10) subunit. May be a component of the inflammasome, a protein complex which also includes PYCARD, CARD8 and NLRP2 and whose function would be the activation of pro-inflammatory caspases. Component of the AIM2 PANoptosome complex, a multiprotein complex that drives inflammatory cell death (PANoptosis). Interacts with CARD8; interacts with the released C-terminus of CARD8 which forms an inflammasome and directly activates CASP1 to promote pyroptosis. Both the p10 and p20 subunits interact with MEFV. Interacts with CARD17P/INCA and CARD18. Interacts with SERPINB1; this interaction regulates CASP1 activity. As to quaternary structure, heterotetramer that consists of two anti-parallel arranged heterodimers, each one formed by a 20 kDa (Caspase-1 subunit p20) and a 10 kDa (Caspase-1 subunit p10) subunit. Can form a heterodimer with isoform epsilon which then has an inhibitory effect. Heterotetramer that consists of two anti-parallel arranged heterodimers, each one formed by a 20 kDa (Caspase-1 subunit p20) and a 10 kDa (Caspase-1 subunit p10) subunit. In terms of assembly, can form a heterodimer with Caspase-1 subunit p20 which then has an inhibitory effect. Post-translationally, the two subunits are derived from the precursor sequence by an autocatalytic mechanism. Ubiquitinated via 'Lys-11'-linked polyubiquitination. Deubiquitinated by USP8. In terms of processing, cleavage in the interdomain linker region is required to induce pyroptosis. As to expression, expressed in larger amounts in spleen and lung. Detected in liver, heart, small intestine, colon, thymus, prostate, skeletal muscle, peripheral blood leukocytes, kidney and testis. No expression in the brain.

The protein resides in the cytoplasm. Its subcellular location is the cell membrane. The catalysed reaction is Strict requirement for an Asp residue at position P1 and has a preferred cleavage sequence of Tyr-Val-Ala-Asp-|-.. (Microbial infection) Specifically inhibited by the cowpox virus Crma protein. Its function is as follows. Thiol protease involved in a variety of inflammatory processes by proteolytically cleaving other proteins, such as the precursors of the inflammatory cytokines interleukin-1 beta (IL1B) and interleukin 18 (IL18) as well as the pyroptosis inducer Gasdermin-D (GSDMD), into active mature peptides. Plays a key role in cell immunity as an inflammatory response initiator: once activated through formation of an inflammasome complex, it initiates a pro-inflammatory response through the cleavage of the two inflammatory cytokines IL1B and IL18, releasing the mature cytokines which are involved in a variety of inflammatory processes. Cleaves a tetrapeptide after an Asp residue at position P1. Also initiates pyroptosis, a programmed lytic cell death pathway, through cleavage of GSDMD. In contrast to cleavage of interleukin IL1B, recognition and cleavage of GSDMD is not strictly dependent on the consensus cleavage site but depends on an exosite interface on CASP1 that recognizes and binds the Gasdermin-D, C-terminal (GSDMD-CT) part. Cleaves and activates CASP7 in response to bacterial infection, promoting plasma membrane repair. Upon inflammasome activation, during DNA virus infection but not RNA virus challenge, controls antiviral immunity through the cleavage of CGAS, rendering it inactive. In apoptotic cells, cleaves SPHK2 which is released from cells and remains enzymatically active extracellularly. Apoptosis inactive. In Homo sapiens (Human), this protein is Caspase-1 (CASP1).